The following is an 84-amino-acid chain: Subtilisin-chymotrypsin inhibitor WSCI (84 aa).

Residues 1-12 (MSSVVKKPLGGN) form the signal peptide. The tract at residues 1–28 (MSSVVKKPLGGNTDTGDHHNQKTEWPEL) is disordered. Residues 15-25 (TGDHHNQKTEW) are compositionally biased toward basic and acidic residues.

In terms of assembly, monomer.

It localises to the secreted. In terms of biological role, inhibits B.lichenoformis subtilisin, B.subtilis subtilisin, bovine pancreatic alpha-chymotrypsin and porcine alpha-chymotrypsin with Ki of 3.92 nM, 5.70 nM, 7.24 nM and 9.35 nM respectively. B.lichenoformis subtilisin is inhibited with a molar ratio of 1:0.87. Also inhibits chymotrypsin-like activities from the digestive tracts of the insect larvae T.molitor, P.interpunctella and H.armigera. Does not inhibit bovine pancreatic trypsin, porcine pancreatic elastase, or human leukocyte elastase. The chain is Subtilisin-chymotrypsin inhibitor WSCI from Triticum aestivum (Wheat).